Consider the following 432-residue polypeptide: Glutamate-1-semialdehyde 2,1-aminomutase (432 aa).

At K269 the chain carries N6-(pyridoxal phosphate)lysine.

It belongs to the class-III pyridoxal-phosphate-dependent aminotransferase family. HemL subfamily. In terms of assembly, homodimer. Pyridoxal 5'-phosphate serves as cofactor.

Its subcellular location is the cytoplasm. It carries out the reaction (S)-4-amino-5-oxopentanoate = 5-aminolevulinate. It functions in the pathway porphyrin-containing compound metabolism; protoporphyrin-IX biosynthesis; 5-aminolevulinate from L-glutamyl-tRNA(Glu): step 2/2. This is Glutamate-1-semialdehyde 2,1-aminomutase from Desulforudis audaxviator (strain MP104C).